A 715-amino-acid chain; its full sequence is Putative macrophage stimulating 1-like protein (715 aa).

An N-terminal signal peptide occupies residues 1–20; sequence MAPAPVTLLAPGAASSMSCS. The region spanning 21 to 110 is the PAN domain; that stretch reads QPGQRSPSND…GRCDLFQEKG (90 aa). Kringle domains lie at 63–156, 160–238, 252–345, and 353–464; these read GRCG…IKSC, ACVW…LPRC, SCFR…IRRC, and DCYH…LRRC. Cystine bridges form between Cys127/Cys151, Cys161/Cys238, Cys182/Cys221, Cys210/Cys233, Cys253/Cys345, Cys316/Cys339, Cys354/Cys464, Cys375/Cys447, Cys511/Cys527, Cys606/Cys671, Cys636/Cys650, and Cys661/Cys689. In terms of domain architecture, Peptidase S1 spans 488–713; sequence VAGGHPGNSP…FVDWIHKVMR (226 aa).

Belongs to the peptidase S1 family. Plasminogen subfamily.

The protein localises to the secreted. The chain is Putative macrophage stimulating 1-like protein (MST1L) from Homo sapiens (Human).